Consider the following 97-residue polypeptide: Class II hydrophobin NC2 (97 aa).

The first 17 residues, 1 to 17, serve as a signal peptide directing secretion; that stretch reads MQFTIATVLSLLTITLA. 4 disulfide bridges follow: Cys31/Cys79, Cys40/Cys70, Cys41/Cys53, and Cys80/Cys91. Asn62 carries an N-linked (GlcNAc...) asparagine glycan.

This sequence belongs to the cerato-ulmin hydrophobin family. Homotrimer. Further self-assembles to form highly ordered films at water-air interfaces through intermolecular interactions.

Its subcellular location is the secreted. It localises to the cell wall. Aerial growth, conidiation, and dispersal of filamentous fungi in the environment rely upon a capability of their secreting small amphipathic proteins called hydrophobins (HPBs) with low sequence identity. Class I can self-assemble into an outermost layer of rodlet bundles on aerial cell surfaces, conferring cellular hydrophobicity that supports fungal growth, development and dispersal; whereas Class II form highly ordered films at water-air interfaces through intermolecular interactions but contribute nothing to the rodlet structure. NC2 is a class II hydrophobin that has the potential to adsorb to the hydrophobic interface at the hydrophobic-hydrophilic interface at very high rate but the predicted self-assembly NC2 film possesses a lower flexural rigidity than other class II hydrophobins such as HFBII from Hypocrea jecorina (also known as Trichoderma reesei). The sequence is that of Class II hydrophobin NC2 from Neurospora crassa (strain ATCC 24698 / 74-OR23-1A / CBS 708.71 / DSM 1257 / FGSC 987).